Reading from the N-terminus, the 367-residue chain is DNA replication and repair protein RecF (367 aa).

An ATP-binding site is contributed by 30-37 (GANGSGKT).

This sequence belongs to the RecF family.

It localises to the cytoplasm. In terms of biological role, the RecF protein is involved in DNA metabolism; it is required for DNA replication and normal SOS inducibility. RecF binds preferentially to single-stranded, linear DNA. It also seems to bind ATP. This Pseudomonas fluorescens (strain Pf0-1) protein is DNA replication and repair protein RecF.